A 351-amino-acid polypeptide reads, in one-letter code: Dihydroorotate dehydrogenase (quinone) (351 aa).

Residues alanine 61–lysine 65 and threonine 85 each bind FMN. Residue lysine 65 participates in substrate binding. Residue asparagine 110 to phenylalanine 114 coordinates substrate. 2 residues coordinate FMN: asparagine 139 and asparagine 172. Asparagine 172 is a binding site for substrate. Catalysis depends on serine 175, which acts as the Nucleophile. Asparagine 177 provides a ligand contact to substrate. FMN contacts are provided by lysine 217 and threonine 245. Asparagine 246–threonine 247 lines the substrate pocket. FMN is bound by residues glycine 268, glycine 297, and tyrosine 318–serine 319.

The protein belongs to the dihydroorotate dehydrogenase family. Type 2 subfamily. As to quaternary structure, monomer. Requires FMN as cofactor.

The protein resides in the cell membrane. It carries out the reaction (S)-dihydroorotate + a quinone = orotate + a quinol. The protein operates within pyrimidine metabolism; UMP biosynthesis via de novo pathway; orotate from (S)-dihydroorotate (quinone route): step 1/1. Its function is as follows. Catalyzes the conversion of dihydroorotate to orotate with quinone as electron acceptor. The polypeptide is Dihydroorotate dehydrogenase (quinone) (Xanthomonas axonopodis pv. citri (strain 306)).